The sequence spans 35 residues: Photosystem II reaction center protein T (35 aa).

A helical transmembrane segment spans residues 3–23 (SVAYILIFTLCIGTIFFAIAF).

It belongs to the PsbT family. As to quaternary structure, PSII is composed of 1 copy each of membrane proteins PsbA, PsbB, PsbC, PsbD, PsbE, PsbF, PsbH, PsbI, PsbJ, PsbK, PsbL, PsbM, PsbT, PsbX, PsbY, PsbZ, Psb30/Ycf12, peripheral proteins PsbO, CyanoQ (PsbQ), PsbU, PsbV and a large number of cofactors. It forms dimeric complexes.

The protein resides in the cellular thylakoid membrane. Its function is as follows. Found at the monomer-monomer interface of the photosystem II (PS II) dimer, plays a role in assembly and dimerization of PSII. PSII is a light-driven water plastoquinone oxidoreductase, using light energy to abstract electrons from H(2)O, generating a proton gradient subsequently used for ATP formation. This Nostoc punctiforme (strain ATCC 29133 / PCC 73102) protein is Photosystem II reaction center protein T.